The sequence spans 140 residues: Nucleoside diphosphate kinase (140 aa).

ATP is bound by residues lysine 11, phenylalanine 59, arginine 87, threonine 93, arginine 104, and asparagine 114. The active-site Pros-phosphohistidine intermediate is histidine 117.

This sequence belongs to the NDK family. In terms of assembly, homotetramer. It depends on Mg(2+) as a cofactor.

The protein resides in the cytoplasm. It catalyses the reaction a 2'-deoxyribonucleoside 5'-diphosphate + ATP = a 2'-deoxyribonucleoside 5'-triphosphate + ADP. It carries out the reaction a ribonucleoside 5'-diphosphate + ATP = a ribonucleoside 5'-triphosphate + ADP. Its function is as follows. Major role in the synthesis of nucleoside triphosphates other than ATP. The ATP gamma phosphate is transferred to the NDP beta phosphate via a ping-pong mechanism, using a phosphorylated active-site intermediate. The protein is Nucleoside diphosphate kinase of Sinorhizobium medicae (strain WSM419) (Ensifer medicae).